The sequence spans 242 residues: Lactate utilization protein A 1 (242 aa).

The protein belongs to the LutA/YkgE family.

In terms of biological role, is involved in L-lactate degradation and allows cells to grow with lactate as the sole carbon source. The polypeptide is Lactate utilization protein A 1 (Bacillus anthracis (strain CDC 684 / NRRL 3495)).